We begin with the raw amino-acid sequence, 445 residues long: Reticulon-4 receptor-like 1 (445 aa).

The signal sequence occupies residues 1–24; that stretch reads MLRKGCCVELLLLLLAGELPLSGG. Positions 25–54 constitute an LRRNT domain; sequence CPRDCVCYPSPMTVSCQAHNFAAIPEGIPE. 8 LRR repeats span residues 55 to 76, 77 to 98, 101 to 123, 126 to 147, 150 to 171, 174 to 195, 198 to 219, and 222 to 243; these read DSER…HFSP, AMVT…TFEG, HLEE…TFQG, KLHA…IFGG, SLQY…IFVD, NLSH…IFRG, NLDR…AFHD, and RLTT…CLAP. Residues 255–306 form the LRRCT domain; that stretch reads NAWDCGCRARSLWEWLRRFRGSSSVVPCATPELRQGQDLKSLRVEDFRNCTG. 2 disordered regions span residues 304-380 and 401-421; these read CTGP…ELPE and RPKR…SGVQ. 2 stretches are compositionally biased toward basic residues: residues 352 to 366 and 401 to 413; these read GSKK…HRNR and RPKR…RRTP. Residue Ser424 is the site of GPI-anchor amidated serine attachment. A helical transmembrane segment spans residues 424 to 444; the sequence is SSGTALGVSLLAWILGLVVSL. Residues 425 to 445 constitute a propeptide, removed in mature form; sequence SGTALGVSLLAWILGLVVSLR.

Belongs to the Nogo receptor family. In terms of assembly, identified in a complex that contains RTN4R, RTN4RL1 and NGFR; the interaction depends on the presence of chondroitin sulfate proteoglycans. Does not interact with MAG, OMG and RTN4. Detected in brain (at protein level). Expressed in various regions of the brain, including the cerebral cortex, hippocampus, striatum, thalamus and cerebellum.

It localises to the cell membrane. The protein resides in the membrane raft. It is found in the perikaryon. Its subcellular location is the cell projection. Its function is as follows. Cell surface receptor. Plays a functionally redundant role in postnatal brain development and in regulating axon regeneration in the adult central nervous system. Contributes to normal axon migration across the brain midline and normal formation of the corpus callosum. Protects motoneurons against apoptosis; protection against apoptosis is probably mediated by MAG. Plays a role in inhibiting neurite outgrowth and axon regeneration via its binding to neuronal chondroitin sulfate proteoglycans. Binds heparin. Like other family members, plays a role in restricting the number dendritic spines and the number of synapses that are formed during brain development. Signaling mediates activation of Rho and downstream reorganization of the actin cytoskeleton. This chain is Reticulon-4 receptor-like 1, found in Rattus norvegicus (Rat).